Reading from the N-terminus, the 157-residue chain is uncharacterized protein (157 aa).

The N-acetyltransferase domain maps to 9–154 (LLINYKTLDE…ETNLNAVTNE (146 aa)).

This is an uncharacterized protein from Bacillus cereus (strain ATCC 14579 / DSM 31 / CCUG 7414 / JCM 2152 / NBRC 15305 / NCIMB 9373 / NCTC 2599 / NRRL B-3711).